We begin with the raw amino-acid sequence, 282 residues long: 4-hydroxybenzoate octaprenyltransferase (282 aa).

9 consecutive transmembrane segments (helical) span residues 17–37 (IGIL…NQGF), 40–60 (IDLL…GCVI), 90–110 (AFIL…KLPI), 113–133 (FYFA…KRFL), 135–155 (APQL…FIAS), 163–183 (FIVL…MYAM), 207–227 (LIIA…AINK), 231–251 (WFFY…LKLI), and 262–282 (AFLV…LALI).

Belongs to the UbiA prenyltransferase family. Mg(2+) serves as cofactor.

It is found in the cell inner membrane. The catalysed reaction is all-trans-octaprenyl diphosphate + 4-hydroxybenzoate = 4-hydroxy-3-(all-trans-octaprenyl)benzoate + diphosphate. Its pathway is cofactor biosynthesis; ubiquinone biosynthesis. Its function is as follows. Catalyzes the prenylation of para-hydroxybenzoate (PHB) with an all-trans polyprenyl group. Mediates the second step in the final reaction sequence of ubiquinone-8 (UQ-8) biosynthesis, which is the condensation of the polyisoprenoid side chain with PHB, generating the first membrane-bound Q intermediate 3-octaprenyl-4-hydroxybenzoate. The sequence is that of 4-hydroxybenzoate octaprenyltransferase from Legionella pneumophila subsp. pneumophila (strain Philadelphia 1 / ATCC 33152 / DSM 7513).